The primary structure comprises 145 residues: Large ribosomal subunit protein uL16 (145 aa).

Belongs to the universal ribosomal protein uL16 family. Part of the 50S ribosomal subunit.

In terms of biological role, binds 23S rRNA and is also seen to make contacts with the A and possibly P site tRNAs. The chain is Large ribosomal subunit protein uL16 from Herpetosiphon aurantiacus (strain ATCC 23779 / DSM 785 / 114-95).